The chain runs to 183 residues: uncharacterized protein (183 aa).

Lys21 is covalently cross-linked (Glycyl lysine isopeptide (Lys-Gly) (interchain with G-Cter in ubiquitin)). Disordered stretches follow at residues 24-111 and 160-183; these read NTTT…QNDN and PQSI…TRRP. Positions 99-108 are enriched in low complexity; sequence QQQQQQQQQQ. Over residues 170 to 183 the composition is skewed to polar residues; sequence LPPSNASNTTTRRP.

It is found in the cytoplasm. This is an uncharacterized protein from Saccharomyces cerevisiae (strain ATCC 204508 / S288c) (Baker's yeast).